The following is a 248-amino-acid chain: Putative mutator protein MutT4 (248 aa).

Positions 1–64 are disordered; the sequence is MSDGEQAKSR…GSTRMRTVHE (64 aa). Over residues 9–20 the composition is skewed to basic residues; that stretch reads SRRRRGRRRGRR. The segment covering 31 to 44 has biased composition (low complexity); it reads AQPAGDATPTPATA. Positions 45 to 57 are enriched in basic residues; the sequence is KRSRSRSPRRGST. The region spanning 62 to 198 is the Nudix hydrolase domain; the sequence is VHETSAGGLV…DERRLAEVAD (137 aa). 4 residues coordinate Mg(2+): Gly-103, Glu-118, Glu-121, and Glu-122. The Nudix box motif lies at 103–124; it reads GHIELGETAEQTAIREVAEETG. Residues 204-248 are disordered; that stretch reads LQSDGPAALPPLPPSSPRRRPQTHSRARHADDSAPGQHNGPGPGP. The segment covering 220–230 has biased composition (basic residues); the sequence is PRRRPQTHSRA.

It belongs to the Nudix hydrolase family. It depends on Mg(2+) as a cofactor. Mn(2+) serves as cofactor.

In terms of biological role, may be involved in the GO system responsible for removing an oxidatively damaged form of guanine (7,8-dihydro-8-oxoguanine, 8-oxo-dGTP) from DNA and the nucleotide pool. The chain is Putative mutator protein MutT4 (mutT4) from Mycobacterium tuberculosis (strain CDC 1551 / Oshkosh).